Here is a 91-residue protein sequence, read N- to C-terminus: MTEKFNLQDRFLNMLRTGKIEVKVYLVNGFQTKGIIRSFDSYTILLESENQQNLIYKHAISTIMPSSFVRLVKKEEEEQEGQTESATNKTQ.

The region spanning Asp9–Val69 is the Sm domain.

It belongs to the Hfq family. As to quaternary structure, homohexamer.

Functionally, RNA chaperone that binds small regulatory RNA (sRNAs) and mRNAs to facilitate mRNA translational regulation in response to envelope stress, environmental stress and changes in metabolite concentrations. Also binds with high specificity to tRNAs. In Pseudothermotoga lettingae (strain ATCC BAA-301 / DSM 14385 / NBRC 107922 / TMO) (Thermotoga lettingae), this protein is RNA-binding protein Hfq.